Here is a 311-residue protein sequence, read N- to C-terminus: Trem-like transcript 1 protein (311 aa).

The signal sequence occupies residues 1–15 (MGLTLLLLLLLGLEG). An Ig-like V-type domain is found at 16–121 (QGIVGSLPEV…PQILHRVSLN (106 aa)). The Extracellular portion of the chain corresponds to 16–162 (QGIVGSLPEV…EPSQDEKSIP (147 aa)). 2 disulfide bridges follow: Cys38-Cys104 and Cys52-Cys59. A helical membrane pass occupies residues 163–183 (LIWGAVLLVGLLVAAVVLFAV). Topologically, residues 184–311 (MAKRKQGNRL…NPPNNQTPSS (128 aa)) are cytoplasmic. Cys196 carries the S-palmitoyl cysteine lipid modification. Residues 229–263 (VPHIRLDSPPSFDNTTYTSLPLDSPSGKPSLPAPS) form a disordered region. A compositionally biased stretch (polar residues) spans 239–249 (SFDNTTYTSLP). The ITIM motif lies at 279-284 (VTYATV). Residues 287 to 311 (PGGNKGGGTSCGPAQNPPNNQTPSS) are disordered.

When phosphorylated, interacts with PTPN6. When phosphorylated, interacts with PTPN11. Post-translationally, phosphorylated on tyrosine residues. As to expression, detected in platelets, monocytic leukemia and in T-cell leukemia.

It localises to the cell membrane. It is found in the cytoplasm. In terms of biological role, cell surface receptor that may play a role in the innate and adaptive immune response. This is Trem-like transcript 1 protein (TREML1) from Homo sapiens (Human).